Reading from the N-terminus, the 187-residue chain is uncharacterized protein (187 aa).

A helical membrane pass occupies residues A3–Y23.

Its subcellular location is the membrane. This is an uncharacterized protein from Methanocaldococcus jannaschii (strain ATCC 43067 / DSM 2661 / JAL-1 / JCM 10045 / NBRC 100440) (Methanococcus jannaschii).